The chain runs to 117 residues: Cliotide T9 (117 aa).

A signal peptide spans 1-25 (MAYVRLACLAVIFFFAASVMFTVEA). Positions 26–55 (GIPCGESCVFIPCLTTVVGCSCKNKVCYNN) form a cross-link, cyclopeptide (Gly-Asn). Intrachain disulfides connect Cys29–Cys45, Cys33–Cys47, and Cys38–Cys52. Residues 56–117 (HVIAAEANSI…YLLKDFLKMP (62 aa)) constitute a propeptide, removed in mature form.

Contains 3 disulfide bonds. Post-translationally, this is a cyclic peptide. Expressed in seed but not in root, nodule, flower, stem, shoot, leaf and pod (at protein level).

Probably participates in a plant defense mechanism. This is Cliotide T9 from Clitoria ternatea (Butterfly pea).